The chain runs to 579 residues: Arginine--tRNA ligase (579 aa).

Residues 127-137 (PNLAKEMHVGH) carry the 'HIGH' region motif.

This sequence belongs to the class-I aminoacyl-tRNA synthetase family. In terms of assembly, monomer.

It is found in the cytoplasm. The catalysed reaction is tRNA(Arg) + L-arginine + ATP = L-arginyl-tRNA(Arg) + AMP + diphosphate. The polypeptide is Arginine--tRNA ligase (Stutzerimonas stutzeri (strain A1501) (Pseudomonas stutzeri)).